Here is a 2095-residue protein sequence, read N- to C-terminus: Oxygen-regulated protein 1 (2095 aa).

2 consecutive Doublecortin domains span residues 35–117 (KRIS…VDLD) and 157–236 (RRLV…GNYD). Disordered stretches follow at residues 358-379 (GLSNNDEKNKKSSYPGKTDYGP), 643-688 (ENRK…GKIP), 863-887 (GAEVSEQHVTTRADPLASLKKPDFP), 1400-1430 (NKKKSISSDKEESRTSEEPRSITNSMTSSER), and 1572-1595 (SGYPCKASSNSHNDDSGQEKEPTR). Over residues 1405 to 1419 (ISSDKEESRTSEEPR) the composition is skewed to basic and acidic residues. Residues 1420–1430 (SITNSMTSSER) show a composition bias toward polar residues. The span at 1583-1595 (HNDDSGQEKEPTR) shows a compositional bias: basic and acidic residues.

Interacts (via the doublecortin domains) with microtubules. Interacts with RP1L1. Interacts with MAK. Expressed in the cell bodies and inner segments of photoreceptors. Not found in liver, spleen, kidney, brain, thymus, muscle, heart, lung and testis.

The protein localises to the cytoplasm. The protein resides in the cytoskeleton. It is found in the cilium axoneme. It localises to the cell projection. Its subcellular location is the cilium. The protein localises to the photoreceptor outer segment. Functionally, microtubule-associated protein regulating the stability and length of the microtubule-based axoneme of photoreceptors. Required for the differentiation of photoreceptor cells, it plays a role in the organization of the outer segment of rod and cone photoreceptors ensuring the correct orientation and higher-order stacking of outer segment disks along the photoreceptor axoneme. In Mus musculus (Mouse), this protein is Oxygen-regulated protein 1 (Rp1).